The chain runs to 150 residues: Large ribosomal subunit protein bL9 (150 aa).

Belongs to the bacterial ribosomal protein bL9 family.

In terms of biological role, binds to the 23S rRNA. This chain is Large ribosomal subunit protein bL9, found in Pseudoalteromonas translucida (strain TAC 125).